A 478-amino-acid polypeptide reads, in one-letter code: Ribosome biogenesis protein NOP53 (478 aa).

Positions 1-10 (MAAGGSGVGG) are enriched in gly residues. Residues 1-51 (MAAGGSGVGGKRSSKSDADSGFLGLRPTSVDPALRRRRRGPRNKKRGWRRL) are disordered. Ala2 bears the N-acetylalanine mark. Phosphoserine is present on Ser29. Positions 35-49 (RRRRRGPRNKKRGWR) are enriched in basic residues. Residues Ser93 and Ser305 each carry the phosphoserine modification. Residues 148 to 431 (KEQLWEKLAK…SELTDSLRTL (284 aa)) are mediates interaction with CDKN2A/isoform tumor suppressor ARF. The mediates interaction with NF2 stretch occupies residues 181–478 (KPGPQDTVER…EKRAFREIQL (298 aa)). The interval 303–344 (EESDGEGEPGQGEGPEAGDAEVCPTPARLATTEKKTEQQRRR) is disordered. Positions 333-342 (TTEKKTEQQR) are enriched in basic and acidic residues. Positions 342–386 (RRREKAVHRLRVQQAALRAARLRHQELFRLRGIKAQVALRLAELA) are mediates interaction with human herpesvirus 8 protein ORF16. Nucleolar localization signal stretches follow at residues 347 to 395 (AVHR…RQAR) and 396 to 478 (REAE…EIQL).

It belongs to the NOP53 family. As to quaternary structure, homooligomer. Interacts with PTEN; regulates PTEN phosphorylation and increases its stability. Interacts with RPL11; retains RPL11 into the nucleolus. Interacts with CDKN2A/isoform tumor suppressor ARF; the interaction is direct and promotes ARF nucleoplasmic relocalization and ubiquitin-mediated proteasomal degradation. Interacts with NPM1; the interaction is direct and competitive with MYC. Interacts with NF2 (via FERM domain); the interaction is direct. Interacts with p53/TP53 (via the oligomerization region); the interaction is direct and may prevent the MDM2-mediated proteasomal degradation of p53/TP53. Interacts with RIGI; may regulate RIGI through USP15-mediated 'Lys-63'-linked deubiquitination. Interacts with UBTF. In terms of assembly, (Microbial infection) Interacts with herpes simplex virus 1 early proteins ICP22 and ICP0. (Microbial infection) Interacts with Human herpesvirus 8 protein ORF16; may sequester ORF16 in host nucleolus and reduce its antiapoptotic activity. Ubiquitin-mediated proteasomal degradation is regulated by c-JUN. It is associated with relocalization to the nucleoplasm and decreased homooligomerization. Post-translationally, phosphorylated upon DNA damage probably by ATM and DNA-PK; may regulate NOP53 degradation. In terms of tissue distribution, expressed at high levels in heart and pancreas, moderate levels in placenta, liver, skeletal muscle, and kidney, and low levels in brain and lung.

The protein localises to the nucleus. The protein resides in the nucleolus. Its subcellular location is the nucleoplasm. Its function is as follows. Nucleolar protein which is involved in the integration of the 5S RNP into the ribosomal large subunit during ribosome biogenesis. In ribosome biogenesis, may also play a role in rRNA transcription. Also functions as a nucleolar sensor that regulates the activation of p53/TP53 in response to ribosome biogenesis perturbation, DNA damage and other stress conditions. DNA damage or perturbation of ribosome biogenesis disrupt the interaction between NOP53 and RPL11 allowing RPL11 transport to the nucleoplasm where it can inhibit MDM2 and allow p53/TP53 activation. It may also positively regulate the function of p53/TP53 in cell cycle arrest and apoptosis through direct interaction, preventing its MDM2-dependent ubiquitin-mediated proteasomal degradation. Originally identified as a tumor suppressor, it may also play a role in cell proliferation and apoptosis by positively regulating the stability of PTEN, thereby antagonizing the PI3K-AKT/PKB signaling pathway. May also inhibit cell proliferation and increase apoptosis through its interaction with NF2. May negatively regulate NPM1 by regulating its nucleoplasmic localization, oligomerization and ubiquitin-mediated proteasomal degradation. Thereby, may prevent NPM1 interaction with MYC and negatively regulate transcription mediated by the MYC-NPM1 complex. May also regulate cellular aerobic respiration. In the cellular response to viral infection, may play a role in the attenuation of interferon-beta through the inhibition of RIGI. The protein is Ribosome biogenesis protein NOP53 of Homo sapiens (Human).